The sequence spans 42 residues: Fungal defensin eurocin (42 aa).

Residues phenylalanine 2, glycine 3, cysteine 4, and histidine 14 each coordinate beta-D-GlcNAc-(1-&gt;4)-Mur2Ac(oyl-L-Ala-gamma-D-Glu-L-Lys-D-Ala-D-Ala)-di-trans,octa-cis-undecaprenyl diphosphate. 3 disulfides stabilise this stretch: cysteine 4/cysteine 27, cysteine 11/cysteine 38, and cysteine 15/cysteine 40. Residues 31–35 form an interaction site with membranes lipids region; sequence WYLGH. Beta-D-GlcNAc-(1-&gt;4)-Mur2Ac(oyl-L-Ala-gamma-D-Glu-L-Lys-D-Ala-D-Ala)-di-trans,octa-cis-undecaprenyl diphosphate is bound at residue cysteine 38.

Belongs to the invertebrate defensin family.

It is found in the secreted. The protein resides in the target cell membrane. Functionally, antimicrobial peptide that acts against Gram-positive bacteria but not against Gram-negative bacteria. It selectively inhibits peptidoglycan biosynthesis through complex formation with the cell wall precursor lipid II (1:1 molar ratio) thus inhibiting cell wall synthesis. It does not disrupt cell membranes. In vivo, is effective against an intraperitoneal infection with S.pneumoniae. In vitro, it shows very low hemolytic and cytolytic activities. In Aspergillus amstelodami, this protein is Fungal defensin eurocin.